The primary structure comprises 344 residues: Ferrochelatase (344 aa).

Fe cation contacts are provided by histidine 214 and glutamate 295.

Belongs to the ferrochelatase family.

Its subcellular location is the cytoplasm. The catalysed reaction is heme b + 2 H(+) = protoporphyrin IX + Fe(2+). It functions in the pathway porphyrin-containing compound metabolism; protoheme biosynthesis; protoheme from protoporphyrin-IX: step 1/1. Functionally, catalyzes the ferrous insertion into protoporphyrin IX. The polypeptide is Ferrochelatase (Rhizobium etli (strain CIAT 652)).